The sequence spans 157 residues: Transcription elongation factor GreA (157 aa).

Positions 14 to 37 (LREELDRLLKLRPKITEAIAEARE) form a coiled coil.

Belongs to the GreA/GreB family.

In terms of biological role, necessary for efficient RNA polymerase transcription elongation past template-encoded arresting sites. The arresting sites in DNA have the property of trapping a certain fraction of elongating RNA polymerases that pass through, resulting in locked ternary complexes. Cleavage of the nascent transcript by cleavage factors such as GreA or GreB allows the resumption of elongation from the new 3'terminus. GreA releases sequences of 2 to 3 nucleotides. This chain is Transcription elongation factor GreA, found in Vibrio cholerae serotype O1 (strain ATCC 39315 / El Tor Inaba N16961).